Reading from the N-terminus, the 22-residue chain is Myofibril-bound serine protease (22 aa).

The region spanning 1-22 (IVGGYECEAYSKPYQVSINLGY) is the Peptidase S1 domain.

Belongs to the peptidase S1 family. In terms of tissue distribution, detected in skeletal muscle (at protein level).

It localises to the cytoplasm. Serine protease which degrades the myosin heavy chain and tropomyosin, but not actin. Selectively cleaves Arg-|-Xaa bonds. The polypeptide is Myofibril-bound serine protease (Saurida undosquamis (Brushtooth lizardfish)).